The chain runs to 81 residues: Extracellular matrix regulatory protein B (81 aa).

In terms of biological role, regulates the biosynthesis of the extracellular matrix and the biofilm formation. May act as an enhancer of biofilm gene expression. Acts in parallel to the pathway that governs SinR derepression. The sequence is that of Extracellular matrix regulatory protein B from Bacillus subtilis (strain 168).